The chain runs to 210 residues: Orotate phosphoribosyltransferase (210 aa).

5-phospho-alpha-D-ribose 1-diphosphate contacts are provided by residues R94, K98, H100, and 120 to 128 (EDLISTGGS). S124 is a binding site for orotate.

This sequence belongs to the purine/pyrimidine phosphoribosyltransferase family. PyrE subfamily. As to quaternary structure, homodimer. The cofactor is Mg(2+).

It carries out the reaction orotidine 5'-phosphate + diphosphate = orotate + 5-phospho-alpha-D-ribose 1-diphosphate. It participates in pyrimidine metabolism; UMP biosynthesis via de novo pathway; UMP from orotate: step 1/2. Catalyzes the transfer of a ribosyl phosphate group from 5-phosphoribose 1-diphosphate to orotate, leading to the formation of orotidine monophosphate (OMP). The sequence is that of Orotate phosphoribosyltransferase from Halalkalibacterium halodurans (strain ATCC BAA-125 / DSM 18197 / FERM 7344 / JCM 9153 / C-125) (Bacillus halodurans).